A 149-amino-acid chain; its full sequence is Nucleoside diphosphate kinase (149 aa).

Lysine 9, phenylalanine 57, arginine 85, threonine 91, arginine 102, and asparagine 112 together coordinate ATP. Histidine 115 serves as the catalytic Pros-phosphohistidine intermediate.

This sequence belongs to the NDK family. As to quaternary structure, homotetramer. Mg(2+) is required as a cofactor.

It is found in the cytoplasm. The catalysed reaction is a 2'-deoxyribonucleoside 5'-diphosphate + ATP = a 2'-deoxyribonucleoside 5'-triphosphate + ADP. It catalyses the reaction a ribonucleoside 5'-diphosphate + ATP = a ribonucleoside 5'-triphosphate + ADP. In terms of biological role, major role in the synthesis of nucleoside triphosphates other than ATP. The ATP gamma phosphate is transferred to the NDP beta phosphate via a ping-pong mechanism, using a phosphorylated active-site intermediate. This chain is Nucleoside diphosphate kinase, found in Staphylococcus aureus (strain Mu3 / ATCC 700698).